Consider the following 121-residue polypeptide: Large ribosomal subunit protein bL17 (121 aa).

Belongs to the bacterial ribosomal protein bL17 family. In terms of assembly, part of the 50S ribosomal subunit. Contacts protein L32.

This chain is Large ribosomal subunit protein bL17, found in Sulfurihydrogenibium sp. (strain YO3AOP1).